The chain runs to 263 residues: Lens fiber major intrinsic protein (263 aa).

The Cytoplasmic portion of the chain corresponds to 1–9; that stretch reads MWELRSASF. Residues 10-29 traverse the membrane as a helical segment; sequence WRAIFAEFFATLFYVFFGLG. Over 30–41 the chain is Extracellular; sequence SSLRWAPGPLHV. A helical transmembrane segment spans residues 42–59; that stretch reads LQVALAFGLALATLVQTV. Residues 60 to 61 are Cytoplasmic-facing; it reads GH. The discontinuously helical intramembrane region spans 62–77; the sequence is ISGAHVNPAVTFAFLV. Residues 68–70 carry the NPA 1 motif; it reads NPA. The Cytoplasmic portion of the chain corresponds to 78–82; the sequence is GSQMS. Residues 83 to 106 form a helical membrane-spanning segment; the sequence is LLRAFCYIAAQLLGAVAGAAVLYS. The Extracellular segment spans residues 107–127; sequence VTPPAVRGNLALNTLHAGVSV. A helical membrane pass occupies residues 128-148; sequence GQATTVEIFLTLQFVLCIFAT. Topologically, residues 149–156 are cytoplasmic; sequence YDERRNGR. A helical transmembrane segment spans residues 157-175; sequence MGSVALAVGFSLTLGHLFG. Topologically, residues 176-178 are extracellular; sequence MYY. The discontinuously helical intramembrane region spans 179-193; sequence TGAGMNPARSFAPAI. Residues 184 to 186 carry the NPA 2 motif; the sequence is NPA. Residues 194 to 200 lie on the Extracellular side of the membrane; that stretch reads LTRNFSN. The helical transmembrane segment at 201–222 threads the bilayer; sequence HWVYWVGPIIGGGLGSLLYDFL. The Cytoplasmic segment spans residues 223–263; it reads LFPRLKSVSERLSILKGARPSDSNGQPEGTGEPVELKTQAL. The tract at residues 227 to 237 is interaction with CALM; the sequence is LKSVSERLSIL. 3 positions are modified to phosphoserine: Ser-235, Ser-243, and Ser-245. Positions 240–263 are disordered; that stretch reads ARPSDSNGQPEGTGEPVELKTQAL. Asn-246 is subject to Deamidated asparagine.

It belongs to the MIP/aquaporin (TC 1.A.8) family. As to quaternary structure, homotetramer; each monomer provides an independent water pore. Two homotetramers on opposing membranes can dimerize, forming a cell-cell junction. Interacts with CALM; the calcium-calmodulin/CALM complex interacts with the cytoplasmic domains of two aquaporins, leading to channel closure. Interacts with BFSP1 (via C-terminus); prevents calcium-dependent inhibition of the water channel activity. Subject to partial proteolytic cleavage in the eye lens core. Partial proteolysis promotes interactions between tetramers from adjoining membranes. Post-translationally, fatty acylated at Met-1 and Lys-238. The acyl modifications, in decreasing order of ion abundance, are: oleoyl (C18:1) &gt; palmitoyl (C16:0) &gt; stearoyl (C18:0) &gt; eicosenoyl (C20:1) &gt; dihomo-gamma-linolenoyl (C20:3) &gt; palmitoleoyl (C16:1) &gt; eicosadienoyl (C20:2).

Its subcellular location is the cell membrane. The protein localises to the cell junction. It catalyses the reaction H2O(in) = H2O(out). Its activity is regulated as follows. The water channel activity is inhibited by calcium through calmodulin/CALM. Its function is as follows. Aquaporins form homotetrameric transmembrane channels, with each monomer independently mediating water transport across the plasma membrane along its osmotic gradient. Specifically expressed in lens fiber cells, this aquaporin is crucial for maintaining lens water homeostasis and transparency. Beyond water permeability, it also acts as a cell-to-cell adhesion molecule, forming thin junctions between lens fiber cells that are essential for maintaining the ordered structure and transparency of the lens. This Rattus norvegicus (Rat) protein is Lens fiber major intrinsic protein.